The primary structure comprises 59 residues: Large ribosomal subunit protein uL30 (59 aa).

The protein belongs to the universal ribosomal protein uL30 family. Part of the 50S ribosomal subunit.

The chain is Large ribosomal subunit protein uL30 from Mycobacterium sp. (strain JLS).